The following is a 212-amino-acid chain: MSYIVALTGGICSGKSVVAKKFSNLSKKVSVIDADVISKNITQPGSIALRMITKHFGPHILFSNGSLNRSMLKKIIFFNPKDKEWLEQLLHPLIRKETQKTINILSNRSSYILWVVPLLIENNLQKYADHILMIDVHVDIQLNRIISRDKIHKQYAENILLSQVSRQHRLNYADNVIENNKSIDGMTQHIHNLHRDYLKAEKTTTKKTIFSK.

In terms of domain architecture, DPCK spans 4 to 204; the sequence is IVALTGGICS…RDYLKAEKTT (201 aa). 12–17 contacts ATP; the sequence is CSGKSV.

This sequence belongs to the CoaE family.

It localises to the cytoplasm. It catalyses the reaction 3'-dephospho-CoA + ATP = ADP + CoA + H(+). It functions in the pathway cofactor biosynthesis; coenzyme A biosynthesis; CoA from (R)-pantothenate: step 5/5. In terms of biological role, catalyzes the phosphorylation of the 3'-hydroxyl group of dephosphocoenzyme A to form coenzyme A. In Blochmanniella pennsylvanica (strain BPEN), this protein is Dephospho-CoA kinase.